Consider the following 287-residue polypeptide: Probable endonuclease LCL3 (287 aa).

The interval 1–40 (MPWPFGPSGSSEAPPPQKPRDDKVEGREPAKSWNSLLPKP) is disordered. The segment covering 18–30 (KPRDDKVEGREPA) has biased composition (basic and acidic residues). A helical transmembrane segment spans residues 50 to 67 (WAPVFLTAVGSLAAFMFY). The TNase-like domain maps to 88–246 (RSLLGRVTSV…KAKKLGLWSI (159 aa)). R137 is a catalytic residue. Residue D142 coordinates Ca(2+). Residues E145 and R185 contribute to the active site. Residues 254–272 (PRDFKNRTQGNEKSERDVE) show a composition bias toward basic and acidic residues. Residues 254-278 (PRDFKNRTQGNEKSERDVEGSTVQK) are disordered.

The protein belongs to the LCL3 family.

Its subcellular location is the mitochondrion. It is found in the membrane. The polypeptide is Probable endonuclease LCL3 (LCL3) (Verticillium alfalfae (strain VaMs.102 / ATCC MYA-4576 / FGSC 10136) (Verticillium wilt of alfalfa)).